A 253-amino-acid polypeptide reads, in one-letter code: Triosephosphate isomerase, cytosolic (253 aa).

2 residues coordinate substrate: N10 and K12. Catalysis depends on H96, which acts as the Electrophile. E166 (proton acceptor) is an active-site residue.

This sequence belongs to the triosephosphate isomerase family. Homodimer.

It is found in the cytoplasm. It catalyses the reaction D-glyceraldehyde 3-phosphate = dihydroxyacetone phosphate. It functions in the pathway carbohydrate biosynthesis; gluconeogenesis. The protein operates within carbohydrate degradation; glycolysis; D-glyceraldehyde 3-phosphate from glycerone phosphate: step 1/1. The protein is Triosephosphate isomerase, cytosolic of Coptis japonica (Japanese goldthread).